A 163-amino-acid polypeptide reads, in one-letter code: Calcium-binding protein 2 (163 aa).

Residue glycine 2 is the site of N-myristoyl glycine attachment. EF-hand domains follow at residues 21–56, 72–89, 95–130, and 132–163; these read EEIE…LGYM, GKVD…KLLA, IGVR…LLGE, and LSQR…MMSR. The Ca(2+) site is built by aspartate 34, aspartate 36, aspartate 38, tyrosine 40, and glutamate 45. Residues aspartate 108, asparagine 110, aspartate 112, cysteine 114, glutamate 119, aspartate 145, asparagine 147, aspartate 149, and glutamate 156 each coordinate Ca(2+).

It is found in the cytoplasm. The protein localises to the perinuclear region. The protein resides in the cell membrane. Its subcellular location is the golgi apparatus. In terms of biological role, required for sound encoding at inner hair cells (IHCs) synapses, likely via inhibition of the inactivation of voltage-gated calcium channel of type 1.3 (Cav1.3) in the IHCs. Required for the normal transfer of light signals through the retina. The protein is Calcium-binding protein 2 (CABP2) of Bos taurus (Bovine).